Reading from the N-terminus, the 491-residue chain is F-box protein At3g59000 (491 aa).

The F-box domain maps to 1–49 (MDRVGSLPDELLSHILSFLTTKEAALTSLLSKRWRYLIAFVPNLAFDDI).

Part of a SCF (ASK-cullin-F-box) protein ligase complex. Interacts with ASK4.

It is found in the nucleus. The protein operates within protein modification; protein ubiquitination. In terms of biological role, component of SCF(ASK-cullin-F-box) E3 ubiquitin ligase complexes, which may mediate the ubiquitination and subsequent proteasomal degradation of target proteins. This is F-box protein At3g59000 from Arabidopsis thaliana (Mouse-ear cress).